We begin with the raw amino-acid sequence, 260 residues long: Serine/threonine-protein acetyltransferase NGR_a02610 (260 aa).

Residues His123 and Glu143 contribute to the active site. CoA is bound at residue His123. 180 to 181 (KS) lines the CoA pocket. Cys185 is an active-site residue.

Belongs to the acetyltransferase YopJ family.

The enzyme catalyses L-threonyl-[protein] + acetyl-CoA = O-acetyl-L-threonyl-[protein] + CoA. The catalysed reaction is L-seryl-[protein] + acetyl-CoA = O-acetyl-L-seryl-[protein] + CoA. Its function is as follows. Serine/threonine-protein acetyltransferase translocated into infected cells, which mediates acetylation of serine and threonine residues of host target proteins. This chain is Serine/threonine-protein acetyltransferase NGR_a02610, found in Sinorhizobium fredii (strain NBRC 101917 / NGR234).